Reading from the N-terminus, the 237-residue chain is Carbonyl reductase family member 4 (237 aa).

NADP(+) is bound by residues 11–14 (SRGI), 34–35 (RN), Asp-57, and 84–86 (AAG). Ser-135 is a binding site for substrate. NADP(+) contacts are provided by residues Tyr-148, Lys-152, and 181–183 (IHT). The active-site Proton acceptor is the Tyr-148.

Belongs to the short-chain dehydrogenases/reductases (SDR) family. Homotetramer (in vitro). Heterotetramer with HSD17B8; contains two molecules each of HSD17B8 and CBR4.

The protein resides in the mitochondrion matrix. Its pathway is lipid metabolism; fatty acid biosynthesis. Its function is as follows. The heterotetramer with HSD17B8 has NADH-dependent 3-ketoacyl-acyl carrier protein reductase activity, and thereby plays a role in mitochondrial fatty acid biosynthesis. Within the heterotetramer, HSD17B8 binds NADH; CBR4 binds NADPD. The homotetramer has NADPH-dependent quinone reductase activity. Both homotetramer and the heterotetramer have broad in vitro substrate specificity and can reduce 9,10-phenanthrenequinone, 1,4-benzoquinone and various other o-quinones and p-quinones. This chain is Carbonyl reductase family member 4 (cbr4), found in Danio rerio (Zebrafish).